A 291-amino-acid chain; its full sequence is Lipase (291 aa).

Residues 1-17 (MRSSLVLFFVSAWTALA) form the signal peptide. A propeptide spanning residues 18–22 (SPIRR) is cleaved from the precursor. Cystine bridges form between C44–C290, C58–C63, and C126–C129. The active-site Nucleophile is the S168. Active-site charge relay system residues include D223 and H280.

Belongs to the AB hydrolase superfamily. Lipase family.

The catalysed reaction is a triacylglycerol + H2O = a diacylglycerol + a fatty acid + H(+). The protein is Lipase (LIP) of Thermomyces lanuginosus (Humicola lanuginosa).